The chain runs to 69 residues: Bowman-Birk type proteinase inhibitor A2 (69 aa).

Cystine bridges form between Cys-12/Cys-31, Cys-18/Cys-29, Cys-38/Cys-45, and Cys-42/Cys-59.

The protein belongs to the Bowman-Birk serine protease inhibitor family. In terms of tissue distribution, expressed in bulb (at protein level).

Functionally, serine protease inhibitor. The sequence is that of Bowman-Birk type proteinase inhibitor A2 from Hyacinthus orientalis (Common hyacinth).